The chain runs to 298 residues: Putative S-adenosyl-L-methionine-dependent methyltransferase MSMEG_1480/MSMEI_1444 (298 aa).

S-adenosyl-L-methionine-binding positions include Asp-127 and 156 to 157 (DL).

It belongs to the UPF0677 family.

Exhibits S-adenosyl-L-methionine-dependent methyltransferase activity. The polypeptide is Putative S-adenosyl-L-methionine-dependent methyltransferase MSMEG_1480/MSMEI_1444 (Mycolicibacterium smegmatis (strain ATCC 700084 / mc(2)155) (Mycobacterium smegmatis)).